We begin with the raw amino-acid sequence, 118 residues long: Small ribosomal subunit protein uS13 (118 aa).

The interval 94–118 is disordered; that stretch reads SLPVRGQRTKTNARTRKGPRRPIKR.

The protein belongs to the universal ribosomal protein uS13 family. As to quaternary structure, part of the 30S ribosomal subunit. Forms a loose heterodimer with protein S19. Forms two bridges to the 50S subunit in the 70S ribosome.

In terms of biological role, located at the top of the head of the 30S subunit, it contacts several helices of the 16S rRNA. In the 70S ribosome it contacts the 23S rRNA (bridge B1a) and protein L5 of the 50S subunit (bridge B1b), connecting the 2 subunits; these bridges are implicated in subunit movement. Contacts the tRNAs in the A and P-sites. The protein is Small ribosomal subunit protein uS13 of Dichelobacter nodosus (strain VCS1703A).